A 146-amino-acid polypeptide reads, in one-letter code: Large-conductance mechanosensitive channel (146 aa).

Helical transmembrane passes span 21 to 41 (VGII…ADLI), 44 to 64 (IIGL…LGDG), and 83 to 103 (GSFI…FLLV).

It belongs to the MscL family. In terms of assembly, homopentamer.

The protein localises to the cell inner membrane. Functionally, channel that opens in response to stretch forces in the membrane lipid bilayer. May participate in the regulation of osmotic pressure changes within the cell. This chain is Large-conductance mechanosensitive channel, found in Cereibacter sphaeroides (strain ATCC 17023 / DSM 158 / JCM 6121 / CCUG 31486 / LMG 2827 / NBRC 12203 / NCIMB 8253 / ATH 2.4.1.) (Rhodobacter sphaeroides).